The chain runs to 671 residues: Spartin (671 aa).

N-acetylmethionine is present on methionine 1. The MIT domain maps to 16–94 (IKEAYEKAFM…LQNVRTRLEI (79 aa)). Positions 110–175 (VPKLYPEFPP…CPAEAPPAYS (66 aa)) are disordered. Residues 118 to 128 (PPKDACKKSPE) show a composition bias toward basic and acidic residues. The residue at position 126 (serine 126) is a Phosphoserine. Residues 143-158 (GSASAACAGPSGAPSA) show a composition bias toward low complexity. The span at 159 to 174 (LPVPSPSCPAEAPPAY) shows a compositional bias: pro residues. Residues 190–385 (DSGEFSSVGE…SIDQGSKDAR (196 aa)) are ubiquitin-binding region (UBR) domain. The LC3-interacting region (LIR); mediates interaction with MAP1LC3A AND MAP1LC3C motif lies at 193 to 200 (EFSSVGED). Residues 346–421 (FQIPGRSSHP…SSEEKSKELP (76 aa)) are disordered. A Glycyl lysine isopeptide (Lys-Gly) (interchain with G-Cter in ubiquitin) cross-link involves residue lysine 360. Residues 369–379 (QSSSSGSSIDQ) show a composition bias toward low complexity. Basic residues predominate over residues 384-393 (ARHKGKRGKK). A Senescence domain is found at 431-615 (ILSGASWVSW…YNIDNIGIKA (185 aa)). Residues 435-507 (ASWVSWGLVK…LVDGVCTVAN (73 aa)) form a required for localization to lipid droplets region. At serine 474 the chain carries Phosphoserine. The tract at residues 635-671 (VERPQRESQGGATSTEGRRDIGKQVEEEKPGAGKKDK) is disordered. The span at 650–671 (EGRRDIGKQVEEEKPGAGKKDK) shows a compositional bias: basic and acidic residues.

Interacts with ITCH and WWP1. Interacts (via MIT domain) with IST1; leading to the recruitment of SPART to midbodies. Interacts with MAP1LC3A and MAP1LC3C. In terms of processing, ubiquitinated; ubiquitination does not require ITCH and WWP1. Brain (at protein level).

The protein resides in the cytoplasm. It is found in the midbody. Its subcellular location is the lipid droplet. In terms of biological role, lipophagy receptor that plays an important role in lipid droplet (LD) turnover in motor neurons. Localizes to LDs and interacts with components of the autophagy machinery, such as MAP1LC3A/C proteins to deliver LDs to autophagosomes for degradation via lipophagy. Lipid transfer protein required for lipid droplet degradation, including by lipophagy. Can bind and transfer all lipid species found in lipid droplets, from phospholipids to triglycerides and sterol esters but the direction of lipid transfer by spartin and its cargos are unknown. May be implicated in endosomal trafficking, or microtubule dynamics, or both. Participates in cytokinesis. The polypeptide is Spartin (Mus musculus (Mouse)).